The sequence spans 363 residues: Neutral protease 2 homolog MEP7 (363 aa).

Residues 1–19 form the signal peptide; sequence MLLCSMVAALAALATPAFS. The propeptide occupies 20–181; sequence CALPHLDLPE…ARAIQPLDRR (162 aa). 2 disulfides stabilise this stretch: Cys187–Cys259 and Cys266–Cys284. Residue His308 participates in Zn(2+) binding. Glu309 is a catalytic residue. Residues His312 and Asp323 each coordinate Zn(2+).

Belongs to the peptidase M35 family. Zn(2+) is required as a cofactor.

It is found in the secreted. It catalyses the reaction Preferential cleavage of bonds with hydrophobic residues in P1'. Also 3-Asn-|-Gln-4 and 8-Gly-|-Ser-9 bonds in insulin B chain.. Its function is as follows. Secreted metalloproteinase that allows assimilation of proteinaceous substrates. Shows high activities on basic nuclear substrates such as histone and protamine. May be involved in virulence. The polypeptide is Neutral protease 2 homolog MEP7 (MEP7) (Coccidioides posadasii (strain C735) (Valley fever fungus)).